The sequence spans 347 residues: Putative histone PARylation factor 1-like (347 aa).

Position 1 is an N-acetylmethionine (Met1). Lys187 and Lys234 each carry N6-acetyllysine.

Belongs to the HPF1 family.

This is Putative histone PARylation factor 1-like from Homo sapiens (Human).